A 179-amino-acid chain; its full sequence is Large ribosomal subunit protein uL6 (179 aa).

This sequence belongs to the universal ribosomal protein uL6 family. As to quaternary structure, part of the 50S ribosomal subunit.

This protein binds to the 23S rRNA, and is important in its secondary structure. It is located near the subunit interface in the base of the L7/L12 stalk, and near the tRNA binding site of the peptidyltransferase center. This chain is Large ribosomal subunit protein uL6, found in Legionella pneumophila (strain Paris).